We begin with the raw amino-acid sequence, 616 residues long: Hemagglutinin-neuraminidase (616 aa).

The Intravirion segment spans residues 1-26 (MDRAVSQVALENDEREAKNTWRLVFR). A helical transmembrane segment spans residues 27–47 (IAILLLTVVTLAISAAALAYS). At 48–616 (MEASTPSDLI…ELESYAASWP (569 aa)) the chain is on the virion surface side. N-linked (GlcNAc...) asparagine; by host glycosylation occurs at Asn119. The segment at 124–152 (GAPIHDPDYIGGIGKELIVDDASDVTSFY) is important for interaction with fusion/F protein. Disulfide bonds link Cys172-Cys196, Cys186-Cys247, and Cys238-Cys251. The tract at residues 234–239 (NRKSCS) is involved in neuraminidase activity. Residues Asn341 and Asn433 are each glycosylated (N-linked (GlcNAc...) asparagine; by host). 2 cysteine pairs are disulfide-bonded: Cys344–Cys461 and Cys455–Cys465. N-linked (GlcNAc...) asparagine; by host glycans are attached at residues Asn481, Asn538, and Asn600. The cysteines at positions 531 and 542 are disulfide-linked.

Belongs to the paramyxoviruses hemagglutinin-neuraminidase family. As to quaternary structure, homotetramer; composed of disulfide-linked homodimers. Interacts with F protein trimer. Interacts with host CG-1B; this interaction inhibits viral adsorption and replication rather than internalization.

The protein localises to the virion membrane. It is found in the host cell membrane. The catalysed reaction is Hydrolysis of alpha-(2-&gt;3)-, alpha-(2-&gt;6)-, alpha-(2-&gt;8)- glycosidic linkages of terminal sialic acid residues in oligosaccharides, glycoproteins, glycolipids, colominic acid and synthetic substrates.. Its function is as follows. Mediates the viral entry into the host cell together with fusion/F protein. Attaches the virus to sialic acid-containing cell receptors and thereby initiates infection. Binding of HN protein to the receptor induces a conformational change that allows the F protein to trigger virion/cell membranes fusion. Neuraminidase activity ensures the efficient spread of the virus by dissociating the mature virions from the neuraminic acid containing glycoproteins. The sequence is that of Hemagglutinin-neuraminidase (HN) from Newcastle disease virus (strain Chicken/Northern Ireland/Ulster/67) (NDV).